The chain runs to 178 residues: MASSMMVSTAAVSRTSPAQSNMVVPFAGLHSSAAFPVTRKFADSSKLPSNGLRVRCMQVWPPEGKKKFETLSYLPPLTREQLGQEVDYLIRNGWIPCIEFCKVGFVYREYHNSPGYYDGRYWTMWKLPMFGCTDSSQVLKEVDECSKAYPDYFNRIIGFDNTRQVQCISFLTYKPEGN.

Residues 1-55 (MASSMMVSTAAVSRTSPAQSNMVVPFAGLHSSAAFPVTRKFADSSKLPSNGLRVR) constitute a chloroplast transit peptide.

Belongs to the RuBisCO small chain family. As to quaternary structure, heterohexadecamer of 8 large and 8 small subunits.

Its subcellular location is the plastid. It is found in the chloroplast. Functionally, ruBisCO catalyzes two reactions: the carboxylation of D-ribulose 1,5-bisphosphate, the primary event in carbon dioxide fixation, as well as the oxidative fragmentation of the pentose substrate. Both reactions occur simultaneously and in competition at the same active site. Although the small subunit is not catalytic it is essential for maximal activity. This is Ribulose bisphosphate carboxylase small subunit, chloroplastic from Zantedeschia aethiopica (White calla lily).